Here is a 111-residue protein sequence, read N- to C-terminus: uncharacterized protein (111 aa).

A helical transmembrane segment spans residues 48-70 (LFLVPFPASFTRWLTFLFHLVIY).

It localises to the membrane. This is an uncharacterized protein from Saccharomyces cerevisiae (strain ATCC 204508 / S288c) (Baker's yeast).